Here is an 879-residue protein sequence, read N- to C-terminus: MSTERYNAREVEPRWQQIWDEKGVFASRNDDSRPKYYVLEMFPYPSGRIHMGHVRNYTMGDVVARYRRAKGHNVLHPMGWDAFGMPAENAAMQNKTHPAKWTYANIAAMKKQLKSMGLSLDWAREIATCDPSYYKHQQRMFLDFLKAGLVERKQSKVNWDPVDQTVLANEQVIDGRGWRSGALVEQRELTQWFFKISDYSEELLTALDTLDRWPEKVRLMQKNWIGRSEGLLVRFALDAATAPAGESEVEVFTTRPDTLFGAKFVALSPDHPLAAEVAKANPKLEAFIAECHRHGTAQAEIDTAEKLGFDTGLRARHPFDPDWLLPVYVANFVLMDYGTGAIFGCPAHDQRDLDFVNKYGLGNTPVVCPEGQDPKSFVITDTAYDGDGRMINSRFLDGMTIADAKEDVAKRLETATLPRANGGGNAPVAKRQVNYRLRDWGISRQRYWGCPIPIIHCESCGIVPVPVKDLPVKLPDDIEFDRPGNPLDRHPTWKHVACPQCGGKARRETDTMDTFVDSSWYFARFTDPWNENAPTTRKVVDAMMPVDQYIGGIEHAILHLLYSRFFTRAMKATGHVGFDEPFAGLFTQGMVVHETYKNADGSWAAPSEIKIEGTGDARHATLIDTGAPVEIGSIEKMSKSKRNTIDPDDIIGTYGADTARWFMLSDSPPDRDVIWSEEGVQGANRFVQRVWRLVNLAAPHLPKDSAAAGTSADTKPLRSTAHRTLADVSQAIERLRFNTAIAKLYAFVGPLNEAIDDPRLKADPAWAASVREALDMLVRMIAPMMPHLAEQCWEALGGQGLVSEAAWPEVDPVLLVEDTITLPVQINGKKRADVTVGRNAPNPEIEAAVLALDAVKTALAGATPRKIIVVPQRIVNVVV.

The short motif at 43–53 is the 'HIGH' region element; the sequence is PYPSGRIHMGH. The 'KMSKS' region motif lies at 636 to 640; the sequence is KMSKS. Lysine 639 contacts ATP.

The protein belongs to the class-I aminoacyl-tRNA synthetase family.

The protein localises to the cytoplasm. The catalysed reaction is tRNA(Leu) + L-leucine + ATP = L-leucyl-tRNA(Leu) + AMP + diphosphate. This is Leucine--tRNA ligase from Afipia carboxidovorans (strain ATCC 49405 / DSM 1227 / KCTC 32145 / OM5) (Oligotropha carboxidovorans).